We begin with the raw amino-acid sequence, 1728 residues long: U3 small nucleolar RNA-associated protein 10 (1728 aa).

7 HEAT repeats span residues 540–578 (DKDF…LVKE), 881–926 (PANH…MMPA), 986–1024 (FMGS…AYEH), 1191–1229 (LLSI…SEST), 1235–1274 (REAL…KYGK), 1622–1662 (ADAT…GQAA), and 1683–1721 (LQAL…KLGE).

The protein belongs to the HEATR1/UTP10 family. As to quaternary structure, component of the ribosomal small subunit (SSU) processome.

The protein resides in the nucleus. The protein localises to the nucleolus. Its function is as follows. Involved in nucleolar processing of pre-18S ribosomal RNA. Involved in ribosome biosynthesis. This Chaetomium globosum (strain ATCC 6205 / CBS 148.51 / DSM 1962 / NBRC 6347 / NRRL 1970) (Soil fungus) protein is U3 small nucleolar RNA-associated protein 10.